A 432-amino-acid polypeptide reads, in one-letter code: Cyclic 2,3-diphosphoglycerate synthetase (432 aa).

Belongs to the cyclic 2,3-diphosphoglycerate synthetase family.

It is found in the cytoplasm. It carries out the reaction (2R)-2,3-bisphosphoglycerate + ATP + H(+) = cyclic (2R)-2,3-bisphosphoglycerate + ADP + phosphate. Its function is as follows. Catalyzes the formation of cyclic 2,3-diphosphoglycerate (cDPG) by formation of an intramolecular phosphoanhydride bond at the expense of ATP. This chain is Cyclic 2,3-diphosphoglycerate synthetase, found in Thermococcus kodakarensis (strain ATCC BAA-918 / JCM 12380 / KOD1) (Pyrococcus kodakaraensis (strain KOD1)).